Reading from the N-terminus, the 36-residue chain is Egg-laying hormone (36 aa).

A Lysine amide modification is found at Lys-36.

It belongs to the molluscan ELH family. As to expression, bag cell neurons.

The protein localises to the secreted. Its function is as follows. ELH acts as a neurotransmitter locally, upon neurons of the abdominal ganglion and as a hormone by diffusing into the circulating hemolymph and modulating the activity of other organs. It specifically causes contraction of smooth muscle in the ovotestis and expulsion of the egg string. This chain is Egg-laying hormone, found in Aplysia fasciata (Mottled sea hare).